A 319-amino-acid chain; its full sequence is tRNA uridine(34) hydroxylase (319 aa).

A Rhodanese domain is found at leucine 124 to glutamate 218. Cysteine 178 acts as the Cysteine persulfide intermediate in catalysis.

This sequence belongs to the TrhO family.

The catalysed reaction is uridine(34) in tRNA + AH2 + O2 = 5-hydroxyuridine(34) in tRNA + A + H2O. Functionally, catalyzes oxygen-dependent 5-hydroxyuridine (ho5U) modification at position 34 in tRNAs. In Listeria monocytogenes serotype 4a (strain HCC23), this protein is tRNA uridine(34) hydroxylase.